A 57-amino-acid polypeptide reads, in one-letter code: Sperm protamine P1-type (57 aa).

Residues 1–57 (MARYRHNRSRSRSRHRRRRRGHRGGRYRRRRRRGRYGHRRHHRGHSRRRRKRRRSRH) are disordered.

It belongs to the protamine P1 family. As to expression, testis.

The protein localises to the nucleus. It is found in the chromosome. Protamines substitute for histones in the chromatin of sperm during the haploid phase of spermatogenesis. They compact sperm DNA into a highly condensed, stable and inactive complex. The protein is Sperm protamine P1-type of Alligator mississippiensis (American alligator).